We begin with the raw amino-acid sequence, 134 residues long: Transcription antitermination protein NusB (134 aa).

Belongs to the NusB family.

Functionally, involved in transcription antitermination. Required for transcription of ribosomal RNA (rRNA) genes. Binds specifically to the boxA antiterminator sequence of the ribosomal RNA (rrn) operons. In Shewanella sp. (strain MR-4), this protein is Transcription antitermination protein NusB.